We begin with the raw amino-acid sequence, 687 residues long: Glycine--tRNA ligase beta subunit (687 aa).

The protein belongs to the class-II aminoacyl-tRNA synthetase family. As to quaternary structure, tetramer of two alpha and two beta subunits.

Its subcellular location is the cytoplasm. It carries out the reaction tRNA(Gly) + glycine + ATP = glycyl-tRNA(Gly) + AMP + diphosphate. The chain is Glycine--tRNA ligase beta subunit from Neisseria gonorrhoeae (strain NCCP11945).